The sequence spans 512 residues: 2-isopropylmalate synthase (512 aa).

The Pyruvate carboxyltransferase domain occupies 5 to 268; the sequence is LIIFDTTLRD…DVGIDTQHIV (264 aa). Mn(2+) is bound by residues Asp14, His202, His204, and Asn239. Residues 394–512 are regulatory domain; sequence GFVSLAQHSE…SKAERVAAQG (119 aa).

It belongs to the alpha-IPM synthase/homocitrate synthase family. LeuA type 1 subfamily. As to quaternary structure, homodimer. Mn(2+) is required as a cofactor.

The protein localises to the cytoplasm. It catalyses the reaction 3-methyl-2-oxobutanoate + acetyl-CoA + H2O = (2S)-2-isopropylmalate + CoA + H(+). It functions in the pathway amino-acid biosynthesis; L-leucine biosynthesis; L-leucine from 3-methyl-2-oxobutanoate: step 1/4. Functionally, catalyzes the condensation of the acetyl group of acetyl-CoA with 3-methyl-2-oxobutanoate (2-ketoisovalerate) to form 3-carboxy-3-hydroxy-4-methylpentanoate (2-isopropylmalate). This chain is 2-isopropylmalate synthase, found in Acidovorax ebreus (strain TPSY) (Diaphorobacter sp. (strain TPSY)).